Reading from the N-terminus, the 258-residue chain is Alcohol dehydrogenase 2 (258 aa).

9–33 (IFVGGLGFIGYEACKQLMAKNMASF) is a binding site for NAD(+). S137 provides a ligand contact to substrate. The active-site Proton acceptor is the Y150.

This sequence belongs to the short-chain dehydrogenases/reductases (SDR) family. As to quaternary structure, homodimer.

The enzyme catalyses a primary alcohol + NAD(+) = an aldehyde + NADH + H(+). It carries out the reaction a secondary alcohol + NAD(+) = a ketone + NADH + H(+). This chain is Alcohol dehydrogenase 2 (ADH2), found in Ceratitis capitata (Mediterranean fruit fly).